The sequence spans 231 residues: Probable septum site-determining protein MinC (231 aa).

The interval 102 to 125 (KEKAPRPAPAPQAPAQNTTPVTKT) is disordered.

This sequence belongs to the MinC family. In terms of assembly, interacts with MinD and FtsZ.

Its function is as follows. Cell division inhibitor that blocks the formation of polar Z ring septums. Rapidly oscillates between the poles of the cell to destabilize FtsZ filaments that have formed before they mature into polar Z rings. Prevents FtsZ polymerization. The protein is Probable septum site-determining protein MinC of Escherichia coli O139:H28 (strain E24377A / ETEC).